Consider the following 65-residue polypeptide: Large ribosomal subunit protein bL31 (65 aa).

Positions 16, 18, 36, and 39 each coordinate Zn(2+).

It belongs to the bacterial ribosomal protein bL31 family. Type A subfamily. In terms of assembly, part of the 50S ribosomal subunit. Zn(2+) serves as cofactor.

In terms of biological role, binds the 23S rRNA. The sequence is that of Large ribosomal subunit protein bL31 from Geotalea daltonii (strain DSM 22248 / JCM 15807 / FRC-32) (Geobacter daltonii).